Here is a 409-residue protein sequence, read N- to C-terminus: Microfibrillar-associated protein 3-like (409 aa).

An N-terminal signal peptide occupies residues 1–28 (MGLQKSHLTVCLPPSVPFLILVSTLATA). The Extracellular portion of the chain corresponds to 29-148 (KSVTNSTLNG…TLRVIFTSGD (120 aa)). N-linked (GlcNAc...) asparagine glycosylation is found at Asn-33, Asn-37, Asn-67, Asn-111, and Asn-135. An Ig-like C2-type domain is found at 47–141 (PVIIARTDHI…GTINNTVTLR (95 aa)). Cys-68 and Cys-125 are oxidised to a cystine. The helical transmembrane segment at 149–169 (MGVYYMVVCLVAFTIVMILNI) threads the bilayer. Residues 170 to 409 (TRLCMMSSHL…NTCIIYESHV (240 aa)) are Cytoplasmic-facing. Residue Tyr-287 is modified to Phosphotyrosine. 4 positions are modified to phosphoserine: Ser-298, Ser-303, Ser-306, and Ser-307. A disordered region spans residues 319 to 395 (VSVHPQSKRD…AHLETTEPAV (77 aa)). Residues 325–340 (SKRDHVDDQEGGHFEV) show a composition bias toward basic and acidic residues. Low complexity predominate over residues 356–373 (TAEPSTDITTTELTSEET).

Its subcellular location is the cell membrane. It is found in the nucleus. The protein localises to the cytoplasm. May participate in the nuclear signaling of EGFR and MAPK1/ERK2. The sequence is that of Microfibrillar-associated protein 3-like (Mfap3l) from Mus musculus (Mouse).